The primary structure comprises 300 residues: Putative 1-phosphofructokinase (300 aa).

ATP is bound by residues 214-219 (SDGAQG) and 246-247 (GD). The Proton acceptor role is filled by Asp247.

The protein belongs to the carbohydrate kinase PfkB family.

The catalysed reaction is beta-D-fructose 1-phosphate + ATP = beta-D-fructose 1,6-bisphosphate + ADP + H(+). Its function is as follows. Catalyzes the ATP-dependent phosphorylation of fructose-l-phosphate to fructose-l,6-bisphosphate. The protein is Putative 1-phosphofructokinase (fruK) of Mycoplasma pneumoniae (strain ATCC 29342 / M129 / Subtype 1) (Mycoplasmoides pneumoniae).